The chain runs to 349 residues: Dihydroorotate dehydrogenase (quinone) (349 aa).

FMN-binding positions include 67-71 (AGLDK) and Thr91. Lys71 contacts substrate. 116–120 (NRLGF) lines the substrate pocket. FMN is bound by residues Asn147 and Asn180. Substrate is bound at residue Asn180. Ser183 acts as the Nucleophile in catalysis. Asn185 contacts substrate. The FMN site is built by Lys225 and Thr253. 254–255 (NT) is a binding site for substrate. Residues Gly276, Gly305, and 326–327 (YT) each bind FMN.

The protein belongs to the dihydroorotate dehydrogenase family. Type 2 subfamily. Monomer. Requires FMN as cofactor.

The protein resides in the cell membrane. The enzyme catalyses (S)-dihydroorotate + a quinone = orotate + a quinol. The protein operates within pyrimidine metabolism; UMP biosynthesis via de novo pathway; orotate from (S)-dihydroorotate (quinone route): step 1/1. Catalyzes the conversion of dihydroorotate to orotate with quinone as electron acceptor. In Bordetella parapertussis (strain 12822 / ATCC BAA-587 / NCTC 13253), this protein is Dihydroorotate dehydrogenase (quinone).